We begin with the raw amino-acid sequence, 435 residues long: MTDVDLRARPQEGMKEIPAGPKGRHQTVQVTVGNVKVGGGAPIVVQSMTNTDTADIDSTVKQVAALARAGSEMVRITVDREEAAAAVPHIREKLDKLGVDVPLIGDFHYIGHKLLSEYPACAAALAKYRINPGNVGFKNKRDTQFTEIVEIALKNNKAVRIGANWGSLDQELLTRLMEDNAKSPNPIDARAVTREAMVQSALLSAQRAEEIGLPKNKMILSAKVSNVQDLIAVYRELAARSDYAIHLGLTEAGMGSKGIVASSAALGILLQEGIGDTIRVSLTPEPGGDRTLEVKVAQEILQTMGFRTFVPLVAACPGCGRTTSTVFQELARDIQAFINEEMPAWRNRYPGVEQLNVAVMGCIVNGPGESKHADIGISLPGTGETPAAPVFVDGQKFRTLRGATIAADFKALVIDYIEQRYGGAPAKPSTVTAAE.

Over residues 1 to 15 the composition is skewed to basic and acidic residues; the sequence is MTDVDLRARPQEGMK. A disordered region spans residues 1–24; it reads MTDVDLRARPQEGMKEIPAGPKGR. [4Fe-4S] cluster-binding residues include Cys-316, Cys-319, Cys-362, and Glu-369.

It belongs to the IspG family. [4Fe-4S] cluster serves as cofactor.

The catalysed reaction is (2E)-4-hydroxy-3-methylbut-2-enyl diphosphate + oxidized [flavodoxin] + H2O + 2 H(+) = 2-C-methyl-D-erythritol 2,4-cyclic diphosphate + reduced [flavodoxin]. It participates in isoprenoid biosynthesis; isopentenyl diphosphate biosynthesis via DXP pathway; isopentenyl diphosphate from 1-deoxy-D-xylulose 5-phosphate: step 5/6. Its function is as follows. Converts 2C-methyl-D-erythritol 2,4-cyclodiphosphate (ME-2,4cPP) into 1-hydroxy-2-methyl-2-(E)-butenyl 4-diphosphate. This Afipia carboxidovorans (strain ATCC 49405 / DSM 1227 / KCTC 32145 / OM5) (Oligotropha carboxidovorans) protein is 4-hydroxy-3-methylbut-2-en-1-yl diphosphate synthase (flavodoxin).